Here is a 343-residue protein sequence, read N- to C-terminus: UBP1-associated proteins 1A (343 aa).

A disordered region spans residues 1-61 (MAKTLDKSKK…SESDNEFDPE (61 aa)). A compositionally biased stretch (low complexity) spans 28-49 (NKQQQQPESSTPYSSSSSSSDS). Acidic residues predominate over residues 50 to 61 (SDSESDNEFDPE). The RRM domain occupies 104–181 (RKIFVYGLPW…RTATCQLASM (78 aa)). The interval 312-343 (STYPDSDAGGKRGTGKDSDAGGSSFHGYSNYS) is disordered. The span at 319–330 (AGGKRGTGKDSD) shows a compositional bias: basic and acidic residues.

Interacts with UBA1A, UBA2A, UBP1A, UBP1B and UBP1C.

Its subcellular location is the nucleus. Acts as a component of a complex regulating the turnover of mRNAs in the nucleus. Binds with high affinity to RNA molecules that contain U-rich sequences in 3'-UTRs. May function in complex with UBP1 and contribute to the stabilization of mRNAs in the nucleus. However, unlike UBP1, UBA1A does not stimulate pre-mRNA splicing. This is UBP1-associated proteins 1A (UBA1A) from Arabidopsis thaliana (Mouse-ear cress).